A 472-amino-acid chain; its full sequence is 23S rRNA (uracil(1939)-C(5))-methyltransferase RlmD (472 aa).

Positions 1–15 (MSRTAPHRRAPKRYK) are enriched in basic residues. The segment at 1–23 (MSRTAPHRRAPKRYKTPPPAPAH) is disordered. The TRAM domain maps to 23-87 (HVVTGNEPVI…PKFEQAEVVQ (65 aa)). [4Fe-4S] cluster-binding residues include Cys100, Cys106, Cys109, and Cys188. Positions 296, 325, 330, 346, 374, and 395 each coordinate S-adenosyl-L-methionine. Cys428 (nucleophile) is an active-site residue.

The protein belongs to the class I-like SAM-binding methyltransferase superfamily. RNA M5U methyltransferase family. RlmD subfamily.

The catalysed reaction is uridine(1939) in 23S rRNA + S-adenosyl-L-methionine = 5-methyluridine(1939) in 23S rRNA + S-adenosyl-L-homocysteine + H(+). Catalyzes the formation of 5-methyl-uridine at position 1939 (m5U1939) in 23S rRNA. The sequence is that of 23S rRNA (uracil(1939)-C(5))-methyltransferase RlmD from Paraburkholderia xenovorans (strain LB400).